The chain runs to 539 residues: 2,3-bisphosphoglycerate-independent phosphoglycerate mutase (539 aa).

Residues aspartate 37 and serine 86 each coordinate Mn(2+). Serine 86 is a catalytic residue. Residues histidine 147, 177–178, arginine 210, arginine 216, 284–287, and lysine 359 each bind substrate; these read RD and RADR. Mn(2+)-binding residues include aspartate 426, histidine 430, aspartate 467, histidine 468, and histidine 485.

It belongs to the BPG-independent phosphoglycerate mutase family. The cofactor is Mg(2+). Mn(2+) serves as cofactor. In terms of tissue distribution, expressed ubiquitously. High expression levels in the nerve ring region, intestine and body wall muscles.

The catalysed reaction is (2R)-2-phosphoglycerate = (2R)-3-phosphoglycerate. It functions in the pathway carbohydrate degradation; glycolysis; pyruvate from D-glyceraldehyde 3-phosphate: step 3/5. Its activity is regulated as follows. Activity is not affected by 2,3-bisphosphoglycerate. Functionally, catalyzes the interconversion of 2-phosphoglycerate and 3-phosphoglycerate. The polypeptide is 2,3-bisphosphoglycerate-independent phosphoglycerate mutase (Caenorhabditis elegans).